The chain runs to 283 residues: Putative 4-diphosphocytidyl-2-C-methyl-D-erythritol kinase (283 aa).

Residue K11 is part of the active site. Position 95-105 (95-105 (PVCAGMGGGSS)) interacts with ATP. Residue D137 is part of the active site.

It belongs to the GHMP kinase family. IspE subfamily.

It carries out the reaction 4-CDP-2-C-methyl-D-erythritol + ATP = 4-CDP-2-C-methyl-D-erythritol 2-phosphate + ADP + H(+). Functionally, catalyzes the phosphorylation of the position 2 hydroxy group of 4-diphosphocytidyl-2C-methyl-D-erythritol. This Streptococcus equi subsp. equi (strain 4047) protein is Putative 4-diphosphocytidyl-2-C-methyl-D-erythritol kinase.